A 319-amino-acid polypeptide reads, in one-letter code: Non-homologous end joining protein Ku (319 aa).

A Ku domain is found at 10-188; that stretch reads ISFGLVTVPI…PQGIELSEDE (179 aa). The disordered stretch occupies residues 252–319; the sequence is QSVAKAKASR…TTPKKPRRSA (68 aa). A compositionally biased stretch (basic and acidic residues) spans 260–274; the sequence is SRGESGEADVHELPR. The span at 305-319 shows a compositional bias: basic residues; that stretch reads TAAKKTTPKKPRRSA.

The protein belongs to the prokaryotic Ku family. In terms of assembly, homodimer. Interacts with LigD.

Its function is as follows. With LigD forms a non-homologous end joining (NHEJ) DNA repair enzyme, which repairs dsDNA breaks with reduced fidelity. Binds linear dsDNA with 5'- and 3'- overhangs but not closed circular dsDNA nor ssDNA. Recruits and stimulates the ligase activity of LigD. The chain is Non-homologous end joining protein Ku from Streptomyces avermitilis (strain ATCC 31267 / DSM 46492 / JCM 5070 / NBRC 14893 / NCIMB 12804 / NRRL 8165 / MA-4680).